A 333-amino-acid chain; its full sequence is MLVLGIESTAHTFSIGIVKDGKILSQLGKTYIPPSGAGIHPREAAEHHARHAPAILRQLLDMLGLALSDVDVVAYAAGPGLGPALRIGAVLARALAIKLGIPLVPVHHGVAHIEVARYTTNACDPLVVLVSGGHTVITGYSDGRYRVFGETLDVAIGNAIDVFAREVGLGFPGVPAVEKCAEAADTVVAFPMPIIGQDLSYAGLVTHALQLVKSGTPLPVVCKSLIETAYYMLAEVVERALAYTKKKEVVVAGGVARSKRLREILSAASGEHDAVVKIVPDEYAGDNGAMIALTGYYAYKHGIYTTPEQSFVKQRWRLDNVDVPWFYDLCNPH.

Fe cation is bound by residues His-108 and His-112. Substrate is bound by residues 129–133, Asp-161, Glu-178, and Ser-258; that span reads LVSGG. Position 286 (Asp-286) interacts with Fe cation.

This sequence belongs to the KAE1 / TsaD family. Fe(2+) is required as a cofactor.

Its subcellular location is the cytoplasm. The catalysed reaction is L-threonylcarbamoyladenylate + adenosine(37) in tRNA = N(6)-L-threonylcarbamoyladenosine(37) in tRNA + AMP + H(+). In terms of biological role, required for the formation of a threonylcarbamoyl group on adenosine at position 37 (t(6)A37) in tRNAs that read codons beginning with adenine. Is probably involved in the transfer of the threonylcarbamoyl moiety of threonylcarbamoyl-AMP (TC-AMP) to the N6 group of A37. This chain is tRNA N6-adenosine threonylcarbamoyltransferase, found in Pyrobaculum islandicum (strain DSM 4184 / JCM 9189 / GEO3).